Here is a 116-residue protein sequence, read N- to C-terminus: Insulin (116 aa).

A signal peptide spans 1–24 (MAALWLQSFSLLVLLVVSWPGSQA). Disulfide bonds link C32-C102, C44-C115, and C101-C106. Positions 56 to 93 (DVDQLLGFLPPKSGGAAAAGADNEVAEFAFKDQMEMMV) are cleaved as a propeptide — c peptide.

This sequence belongs to the insulin family. Heterodimer of a B chain and an A chain linked by two disulfide bonds.

The protein localises to the secreted. Functionally, insulin decreases blood glucose concentration. It increases cell permeability to monosaccharides, amino acids and fatty acids. It accelerates glycolysis, the pentose phosphate cycle, and glycogen synthesis in liver. This chain is Insulin (ins), found in Lophius americanus (American angler).